Consider the following 254-residue polypeptide: MVIANKNIIFVAGLGGIGFDTSREIVKSGPKNLVILDRIENPAAIAELKALNPKVTVTFYPYDVTVSVAETTKLLKTIFDKLKTVDLLINGAGILDDYQIERTIAVNFTGTVNTTTAIMSFWDKRKGGPGGIIANICSVTGFNAIYQVPVYSASKAAALSFTNSLAKLAPITGVTAYSINPGITKTTLVHKFNSWLDVEPRVAELLLEHPTQTTLQCAQNFVKAIEANQNGAIWKLDLGTLEAIEWTKHWDSHI.

10 to 33 (FVAGLGGIGFDTSREIVKSGPKNL) contributes to the NAD(+) binding site. Residue S138 participates in substrate binding. The Proton acceptor role is filled by Y151.

Belongs to the short-chain dehydrogenases/reductases (SDR) family. Homodimer.

The catalysed reaction is a primary alcohol + NAD(+) = an aldehyde + NADH + H(+). It carries out the reaction a secondary alcohol + NAD(+) = a ketone + NADH + H(+). The polypeptide is Alcohol dehydrogenase 2 (Adh2) (Drosophila mulleri (Fruit fly)).